A 514-amino-acid polypeptide reads, in one-letter code: 2,3-bisphosphoglycerate-independent phosphoglycerate mutase (514 aa).

2 residues coordinate Mn(2+): Asp-14 and Ser-64. Ser-64 acts as the Phosphoserine intermediate in catalysis. Substrate-binding positions include His-125, 155-156 (RD), Arg-187, Arg-193, 263-266 (RADR), and Lys-336. Residues Asp-403, His-407, Asp-444, His-445, and His-463 each contribute to the Mn(2+) site.

This sequence belongs to the BPG-independent phosphoglycerate mutase family. As to quaternary structure, monomer. Mn(2+) is required as a cofactor.

The enzyme catalyses (2R)-2-phosphoglycerate = (2R)-3-phosphoglycerate. Its pathway is carbohydrate degradation; glycolysis; pyruvate from D-glyceraldehyde 3-phosphate: step 3/5. Catalyzes the interconversion of 2-phosphoglycerate and 3-phosphoglycerate. In Shewanella sp. (strain MR-7), this protein is 2,3-bisphosphoglycerate-independent phosphoglycerate mutase.